A 641-amino-acid chain; its full sequence is Fructose-1,6-bisphosphatase class 3 (641 aa).

The protein belongs to the FBPase class 3 family. Mn(2+) is required as a cofactor.

It catalyses the reaction beta-D-fructose 1,6-bisphosphate + H2O = beta-D-fructose 6-phosphate + phosphate. Its pathway is carbohydrate biosynthesis; gluconeogenesis. The polypeptide is Fructose-1,6-bisphosphatase class 3 (Latilactobacillus sakei subsp. sakei (strain 23K) (Lactobacillus sakei subsp. sakei)).